Here is a 222-residue protein sequence, read N- to C-terminus: Ribosomal RNA small subunit methyltransferase G (222 aa).

S-adenosyl-L-methionine is bound by residues Gly-80, Leu-85, Val-131–Glu-132, and Arg-148.

This sequence belongs to the methyltransferase superfamily. RNA methyltransferase RsmG family.

It localises to the cytoplasm. It catalyses the reaction guanosine(527) in 16S rRNA + S-adenosyl-L-methionine = N(7)-methylguanosine(527) in 16S rRNA + S-adenosyl-L-homocysteine. In terms of biological role, specifically methylates the N7 position of guanine in position 527 of 16S rRNA. The protein is Ribosomal RNA small subunit methyltransferase G of Polynucleobacter asymbioticus (strain DSM 18221 / CIP 109841 / QLW-P1DMWA-1) (Polynucleobacter necessarius subsp. asymbioticus).